Here is a 472-residue protein sequence, read N- to C-terminus: Methanethiol oxidase (472 aa).

It belongs to the selenium-binding protein family.

It is found in the nucleus. The protein localises to the cytoplasm. It localises to the cytosol. The protein resides in the membrane. It catalyses the reaction methanethiol + O2 + H2O = hydrogen sulfide + formaldehyde + H2O2 + H(+). The protein operates within organosulfur degradation. Its function is as follows. Catalyzes the oxidation of methanethiol, an organosulfur compound known to be produced in substantial amounts by gut bacteria. Selenium-binding protein which may be involved in the sensing of reactive xenobiotics in the cytoplasm. May be involved in intra-Golgi protein transport. This chain is Methanethiol oxidase (selenbp1), found in Xenopus tropicalis (Western clawed frog).